The chain runs to 113 residues: Nucleoid-associated protein Athe_1143 (113 aa).

It belongs to the YbaB/EbfC family. In terms of assembly, homodimer.

It localises to the cytoplasm. The protein localises to the nucleoid. In terms of biological role, binds to DNA and alters its conformation. May be involved in regulation of gene expression, nucleoid organization and DNA protection. This is Nucleoid-associated protein Athe_1143 from Caldicellulosiruptor bescii (strain ATCC BAA-1888 / DSM 6725 / KCTC 15123 / Z-1320) (Anaerocellum thermophilum).